A 126-amino-acid chain; its full sequence is Small ribosomal subunit protein uS13 (126 aa).

The interval Val-98 to Lys-126 is disordered. The span at Ala-107–Lys-126 shows a compositional bias: basic residues.

This sequence belongs to the universal ribosomal protein uS13 family. In terms of assembly, part of the 30S ribosomal subunit. Forms a loose heterodimer with protein S19. Forms two bridges to the 50S subunit in the 70S ribosome.

Functionally, located at the top of the head of the 30S subunit, it contacts several helices of the 16S rRNA. In the 70S ribosome it contacts the 23S rRNA (bridge B1a) and protein L5 of the 50S subunit (bridge B1b), connecting the 2 subunits; these bridges are implicated in subunit movement. Contacts the tRNAs in the A and P-sites. In Amoebophilus asiaticus (strain 5a2), this protein is Small ribosomal subunit protein uS13.